The following is a 427-amino-acid chain: Gamma-glutamyl phosphate reductase (427 aa).

It belongs to the gamma-glutamyl phosphate reductase family.

Its subcellular location is the cytoplasm. The enzyme catalyses L-glutamate 5-semialdehyde + phosphate + NADP(+) = L-glutamyl 5-phosphate + NADPH + H(+). It participates in amino-acid biosynthesis; L-proline biosynthesis; L-glutamate 5-semialdehyde from L-glutamate: step 2/2. Catalyzes the NADPH-dependent reduction of L-glutamate 5-phosphate into L-glutamate 5-semialdehyde and phosphate. The product spontaneously undergoes cyclization to form 1-pyrroline-5-carboxylate. This is Gamma-glutamyl phosphate reductase from Anaeromyxobacter sp. (strain K).